Reading from the N-terminus, the 98-residue chain is uncharacterized protein (98 aa).

It belongs to the Rv1128c/1148c/1588c/1702c/1945/3466 family.

This is an uncharacterized protein from Mycobacterium tuberculosis (strain ATCC 25618 / H37Rv).